Reading from the N-terminus, the 230-residue chain is Uracil-DNA glycosylase (230 aa).

The Proton acceptor role is filled by Asp70.

It belongs to the uracil-DNA glycosylase (UDG) superfamily. UNG family.

The protein localises to the cytoplasm. It carries out the reaction Hydrolyzes single-stranded DNA or mismatched double-stranded DNA and polynucleotides, releasing free uracil.. Functionally, excises uracil residues from the DNA which can arise as a result of misincorporation of dUMP residues by DNA polymerase or due to deamination of cytosine. In Pseudomonas syringae pv. tomato (strain ATCC BAA-871 / DC3000), this protein is Uracil-DNA glycosylase.